The following is a 103-amino-acid chain: Co-chaperonin GroES (103 aa).

This sequence belongs to the GroES chaperonin family. As to quaternary structure, heptamer of 7 subunits arranged in a ring. Interacts with the chaperonin GroEL.

Its subcellular location is the cytoplasm. Functionally, together with the chaperonin GroEL, plays an essential role in assisting protein folding. The GroEL-GroES system forms a nano-cage that allows encapsulation of the non-native substrate proteins and provides a physical environment optimized to promote and accelerate protein folding. GroES binds to the apical surface of the GroEL ring, thereby capping the opening of the GroEL channel. This is Co-chaperonin GroES from Prochlorococcus marinus subsp. pastoris (strain CCMP1986 / NIES-2087 / MED4).